The sequence spans 256 residues: Ribonuclease HII (256 aa).

The region spanning 72–256 (QYIAGMDEVG…SFNPVPKYLN (185 aa)) is the RNase H type-2 domain. 3 residues coordinate a divalent metal cation: D78, E79, and D170.

It belongs to the RNase HII family. Mn(2+) serves as cofactor. It depends on Mg(2+) as a cofactor.

It is found in the cytoplasm. It catalyses the reaction Endonucleolytic cleavage to 5'-phosphomonoester.. Endonuclease that specifically degrades the RNA of RNA-DNA hybrids. The polypeptide is Ribonuclease HII (Limosilactobacillus reuteri (strain DSM 20016) (Lactobacillus reuteri)).